A 192-amino-acid polypeptide reads, in one-letter code: uncharacterized protein (192 aa).

The disordered stretch occupies residues 168 to 192 (PLWRKSEAGSRKARTSNSGGPTKRA). A compositionally biased stretch (polar residues) spans 182 to 192 (TSNSGGPTKRA).

The protein to A.xylinum IS1268 ORFA.

This is an uncharacterized protein from Sinorhizobium fredii (strain NBRC 101917 / NGR234).